The following is a 533-amino-acid chain: Probable galacturonosyltransferase 13 (533 aa).

Over 1–40 the chain is Cytoplasmic; the sequence is MQLHISPSMRSITISSSNEFIDLMKIKVAARHISYRTLFH. Residues 41-61 form a helical; Signal-anchor for type II membrane protein membrane-spanning segment; sequence TILILAFLLPFVFILTAVVTL. The Lumenal portion of the chain corresponds to 62 to 533; sequence EGVNKCSSFD…DFIKNCHILE (472 aa). N-linked (GlcNAc...) asparagine glycosylation is found at N306, N396, N445, and N520.

The protein belongs to the glycosyltransferase 8 family. Expressed in roots, inflorescences, siliques, leaves and stems. Accumulates in pollen grains.

The protein resides in the golgi apparatus membrane. Its pathway is glycan metabolism; pectin biosynthesis. May be involved in pectin and/or xylans biosynthesis in cell walls. Together with GAUT14, required for pollen tube growth, possibly through the regulation of pectin biosynthesis and repartition in the pollen tube wall. In Arabidopsis thaliana (Mouse-ear cress), this protein is Probable galacturonosyltransferase 13.